Consider the following 178-residue polypeptide: Large ribosomal subunit protein uL6 (178 aa).

It belongs to the universal ribosomal protein uL6 family. Part of the 50S ribosomal subunit.

Its function is as follows. This protein binds to the 23S rRNA, and is important in its secondary structure. It is located near the subunit interface in the base of the L7/L12 stalk, and near the tRNA binding site of the peptidyltransferase center. This Streptococcus pneumoniae (strain JJA) protein is Large ribosomal subunit protein uL6.